Reading from the N-terminus, the 223-residue chain is uncharacterized protein (223 aa).

4 helical membrane-spanning segments follow: residues 22 to 42 (LTVG…FVVV), 59 to 79 (GVAL…ATLI), 85 to 105 (IFSL…WCSM), and 164 to 184 (MAWA…SQAF).

Belongs to the Rht family.

It is found in the cell membrane. This is an uncharacterized protein from Escherichia coli (strain K12).